Consider the following 220-residue polypeptide: Large ribosomal subunit protein uL4 (220 aa).

Positions A45 to R102 are disordered. Residues G62 to G73 show a composition bias toward basic residues.

The protein belongs to the universal ribosomal protein uL4 family. In terms of assembly, part of the 50S ribosomal subunit.

Functionally, one of the primary rRNA binding proteins, this protein initially binds near the 5'-end of the 23S rRNA. It is important during the early stages of 50S assembly. It makes multiple contacts with different domains of the 23S rRNA in the assembled 50S subunit and ribosome. Forms part of the polypeptide exit tunnel. This Corynebacterium aurimucosum (strain ATCC 700975 / DSM 44827 / CIP 107346 / CN-1) (Corynebacterium nigricans) protein is Large ribosomal subunit protein uL4.